A 569-amino-acid polypeptide reads, in one-letter code: Proton-coupled zinc antiporter SLC30A9, mitochondrial (569 aa).

The N-terminal 68 residues, 1–68 (MLPGLAAAAA…IGTLSQVKLY (68 aa)), are a transit peptide targeting the mitochondrion. Transmembrane regions (helical) follow at residues 240-260 (VVMV…LAWI), 315-335 (GVGI…MGLL), 343-363 (LLWA…TLLV), 393-413 (VILL…TCMG), and 425-445 (SLGS…LIYT). The LXXLL motif motif lies at 463-467 (LTELL).

It belongs to the cation diffusion facilitator (CDF) transporter (TC 2.A.4) family. SLC30A subfamily. In terms of assembly, interacts with GRIP1, ESR1, AR and CTNNB1.

Its subcellular location is the mitochondrion membrane. The protein resides in the nucleus. It is found in the endoplasmic reticulum. The catalysed reaction is Zn(2+)(in) + 2 H(+)(out) = Zn(2+)(out) + 2 H(+)(in). Its function is as follows. Mitochondrial proton-coupled zinc ion antiporter mediating the export of zinc from the mitochondria and involved in zinc homeostasis, zinc mobilization as well as mitochondrial morphology and health. In nucleus, functions as a secondary coactivator for nuclear receptors by cooperating with p160 coactivators subtypes. Plays a role in transcriptional activation of Wnt-responsive genes. The protein is Proton-coupled zinc antiporter SLC30A9, mitochondrial (SLC30A9) of Pongo abelii (Sumatran orangutan).